A 1533-amino-acid polypeptide reads, in one-letter code: Actin cytoskeleton-regulatory complex protein pan-1 (1533 aa).

The tract at residues 1–204 is disordered; that stretch reads MYSNSNAFLG…PPPPVKPQAT (204 aa). 4 stretches are compositionally biased toward low complexity: residues 19–46, 53–136, 143–170, and 177–193; these read QQPQQQQQQYGAPSPFGQQGPMQPQPTG, GFAP…FQTG, IPQQFQQQQSFQQQQQQQQQPSIQQPQP, and QIQAPAQQPAPTAQGGI. Residues 244–333 enclose the EH 1 domain; it reads DQARFETLFK…DHIKNEVSSM (90 aa). Residues 277–312 form the EF-hand 1 domain; that stretch reads LDGDSLSQIWTLADTTRSGQLHFPEFALAMYLCNLK. Positions 345–359 are enriched in low complexity; sequence AGSSSAPASNAPSFA. Disordered regions lie at residues 345–378 and 393–423; these read AGSSSAPASNAPSFATQQNTAAVPTIQQPQPQPS and QQTGFMGQNQGLQPQQTGFPGMNPQPTGYAG. Polar residues-rich tracts occupy residues 360–378 and 393–410; these read TQQNTAAVPTIQQPQPQPS and QQTGFMGQNQGLQPQQTG. One can recognise an EH 2 domain in the interval 513–602; that stretch reads EKTRYDALFR…PELVPPSARN (90 aa). The EF-hand 2 domain occupies 546–581; the sequence is LDKPDLERIWTLADNGNKGRLDLDEFAVAMHLIYRK. A compositionally biased stretch (basic and acidic residues) spans 649–664; sequence NRKDATVFKNNDEEVG. Disordered regions lie at residues 649-691, 894-917, 935-1306, and 1334-1533; these read NRKD…GDDL, IEDSLKEGAPDSTSEHEKRRWEDA, SRAA…STNP, and DAIS…RVLD. Positions 690–890 form a coiled coil; that stretch reads DLTIEQLRKK…RDVEDSVREF (201 aa). Basic and acidic residues-rich tracts occupy residues 894-916 and 935-947; these read IEDSLKEGAPDSTSEHEKRRWED and SRAARIRSQDRQG. Residues 968 to 982 show a composition bias toward low complexity; the sequence is TPSPSISRTSTPAST. Positions 1026 to 1209 form a coiled coil; that stretch reads ETAAQRAERE…KQLEAIDDED (184 aa). 3 stretches are compositionally biased toward basic and acidic residues: residues 1031 to 1063, 1090 to 1164, and 1173 to 1203; these read RAERERAERAEKRRQAEEEDARREAERQAKLAE, GKAD…EEEK, and EAKEKEAQLAARRAEIEAARKREEELRKQLE. Positions 1204 to 1218 are enriched in acidic residues; it reads AIDDEDSSSSDEEGP. Polar residues predominate over residues 1221–1237; sequence ITPQASTPTVGGSQVGT. Low complexity predominate over residues 1279–1293; it reads SQSSEASTSSVAAPV. A compositionally biased stretch (acidic residues) spans 1348–1367; that stretch reads DDDDDDWGSEKGSDDEDSDD. Over residues 1412–1495 the composition is skewed to pro residues; that stretch reads SSPPPPPAPV…PPPGGAPAPS (84 aa). Positions 1500-1517 constitute a WH2 domain; that stretch reads RPAGLLGEIQAGRALKKT.

This sequence belongs to the PAN1 family. In terms of assembly, component of the PAN1 actin cytoskeleton-regulatory complex.

It localises to the cell membrane. Its subcellular location is the endosome membrane. The protein localises to the cytoplasm. The protein resides in the cytoskeleton. It is found in the actin patch. Its function is as follows. Component of the PAN1 actin cytoskeleton-regulatory complex required for the internalization of endosomes during actin-coupled endocytosis. The complex links the site of endocytosis to the cell membrane-associated actin cytoskeleton. Mediates uptake of external molecules and vacuolar degradation of plasma membrane proteins. Plays a role in the proper organization of the cell membrane-associated actin cytoskeleton and promotes its destabilization. The polypeptide is Actin cytoskeleton-regulatory complex protein pan-1 (pan-1) (Neurospora crassa (strain ATCC 24698 / 74-OR23-1A / CBS 708.71 / DSM 1257 / FGSC 987)).